A 357-amino-acid polypeptide reads, in one-letter code: GDSL esterase/lipase At5g45950 (357 aa).

A signal peptide spans 1–23 (MLLVAFVTLLVAVALQPLPSVLS). An N-linked (GlcNAc...) asparagine glycan is attached at asparagine 37. Serine 47 (nucleophile) is an active-site residue. Asparagine 132 carries N-linked (GlcNAc...) asparagine glycosylation. Residues aspartate 331 and histidine 334 contribute to the active site.

It belongs to the 'GDSL' lipolytic enzyme family.

It is found in the secreted. This chain is GDSL esterase/lipase At5g45950, found in Arabidopsis thaliana (Mouse-ear cress).